The primary structure comprises 21 residues: Bradykinin-potentiating peptide K12 (21 aa).

Residues 1–21 are disordered; sequence LRDYANRVINGGPVEAAGPPA.

Expressed by the venom gland.

It localises to the secreted. In terms of biological role, inhibits angiotensin-converting enzyme (ACE), but does not serve as substrate for the enzyme. Potentiate bradykinin (BK) on the isolated guinea pig ileum as well as the isolated rat uterus for contraction. Also potentiates in vivo the depressor effect of BK on arterial blood pressure in the normotensive anesthetized rat. Intracerebroventricular injection into mice does not show toxic activity. This is Bradykinin-potentiating peptide K12 from Buthus occitanus (Common European scorpion).